The sequence spans 329 residues: G-protein coupled bile acid receptor 1 (329 aa).

Residues 1-18 (MMSHNTTELSAIPRGVQE) lie on the Extracellular side of the membrane. A glycan (N-linked (GlcNAc...) asparagine) is linked at asparagine 5. The chain crosses the membrane as a helical span at residues 19-39 (LSLVLASLIVIANLLLALGIV). Over 40-49 (LDRHLRSPPA) the chain is Cytoplasmic. A helical membrane pass occupies residues 50-70 (GCFFLSLLLAGLLTGLALPTL). The Extracellular portion of the chain corresponds to 71–84 (PGLWNRSHQGYWSC). Asparagine 75 is a glycosylation site (N-linked (GlcNAc...) asparagine). Cysteine 84 and cysteine 154 form a disulfide bridge. Residues 85 to 105 (LLLHLAPNFCFLSLLANLLLV) form a helical membrane-spanning segment. The Cytoplasmic portion of the chain corresponds to 106–124 (HGERYMAVLQPLRPHGSVR). A helical transmembrane segment spans residues 125-145 (LALFLTWISSLLFASLPALGW). At 146–157 (NHWSPGANCSSQ) the chain is on the extracellular side. The N-linked (GlcNAc...) asparagine glycan is linked to asparagine 153. The helical transmembrane segment at 158-178 (AIFPAPYLYLEVYGLLLPAVG) threads the bilayer. Residues 179–229 (ATALLSVRVLATAHHQLREIRRLERAVCRDAPSTLARALTWRQARAQAGAT) lie on the Cytoplasmic side of the membrane. The helical transmembrane segment at 230–250 (LLFLLCWGPYVATLLLSVLAY) threads the bilayer. The Extracellular portion of the chain corresponds to 251 to 260 (ERRPPLGPVT). The chain crosses the membrane as a helical span at residues 261-281 (LLSLISLGSASAAVVPVAMGL). The Cytoplasmic portion of the chain corresponds to 282 to 329 (GDQRYTAPWRTAAQRWLQVLRGRPKRANPGPSTAYHSSSQCSTDLDLN). Residues 306–329 (KRANPGPSTAYHSSSQCSTDLDLN) form a disordered region. The segment covering 311-329 (GPSTAYHSSSQCSTDLDLN) has biased composition (polar residues).

Belongs to the G-protein coupled receptor 1 family.

The protein localises to the cell membrane. Its function is as follows. Receptor for bile acid. Bile acid-binding induces its internalization, activation of extracellular signal-regulated kinase and intracellular cAMP production. May be involved in the suppression of macrophage functions by bile acids. Involved in bile acid promoted GLP1R secretion. This Rattus norvegicus (Rat) protein is G-protein coupled bile acid receptor 1 (Gpbar1).